The sequence spans 45 residues: Large ribosomal subunit protein bL34 (45 aa).

Over residues 1-10 the composition is skewed to polar residues; that stretch reads MTQRTLGGTN. Positions 1 to 45 are disordered; sequence MTQRTLGGTNRKQKRTSGFRARMRKSNGRKVIQARRKKGRHRLSV. Positions 11–45 are enriched in basic residues; it reads RKQKRTSGFRARMRKSNGRKVIQARRKKGRHRLSV.

It belongs to the bacterial ribosomal protein bL34 family.

The protein is Large ribosomal subunit protein bL34 of Crocosphaera subtropica (strain ATCC 51142 / BH68) (Cyanothece sp. (strain ATCC 51142)).